Here is a 124-residue protein sequence, read N- to C-terminus: Small ribosomal subunit protein uS12 (124 aa).

Asp89 is modified (3-methylthioaspartic acid). Positions Thr101 to Glu124 are disordered.

Belongs to the universal ribosomal protein uS12 family. As to quaternary structure, part of the 30S ribosomal subunit. Contacts proteins S8 and S17. May interact with IF1 in the 30S initiation complex.

Its function is as follows. With S4 and S5 plays an important role in translational accuracy. Functionally, interacts with and stabilizes bases of the 16S rRNA that are involved in tRNA selection in the A site and with the mRNA backbone. Located at the interface of the 30S and 50S subunits, it traverses the body of the 30S subunit contacting proteins on the other side and probably holding the rRNA structure together. The combined cluster of proteins S8, S12 and S17 appears to hold together the shoulder and platform of the 30S subunit. This is Small ribosomal subunit protein uS12 from Synechococcus sp. (strain CC9902).